The primary structure comprises 787 residues: Probable phosphoketolase (787 aa).

The protein belongs to the XFP family. Thiamine diphosphate serves as cofactor.

This chain is Probable phosphoketolase, found in Pediococcus pentosaceus (strain ATCC 25745 / CCUG 21536 / LMG 10740 / 183-1w).